A 179-amino-acid polypeptide reads, in one-letter code: Large ribosomal subunit protein uL5 (179 aa).

It belongs to the universal ribosomal protein uL5 family. In terms of assembly, part of the 50S ribosomal subunit; part of the 5S rRNA/L5/L18/L25 subcomplex. Contacts the 5S rRNA and the P site tRNA. Forms a bridge to the 30S subunit in the 70S ribosome.

Its function is as follows. This is one of the proteins that bind and probably mediate the attachment of the 5S RNA into the large ribosomal subunit, where it forms part of the central protuberance. In the 70S ribosome it contacts protein S13 of the 30S subunit (bridge B1b), connecting the 2 subunits; this bridge is implicated in subunit movement. Contacts the P site tRNA; the 5S rRNA and some of its associated proteins might help stabilize positioning of ribosome-bound tRNAs. This Geobacter sulfurreducens (strain ATCC 51573 / DSM 12127 / PCA) protein is Large ribosomal subunit protein uL5.